The following is an 847-amino-acid chain: Ras GTPase-activating protein 2 (847 aa).

The segment covering Met1 to Ala21 has biased composition (low complexity). The segment at Met1 to Arg31 is disordered. An N-acetylalanine modification is found at Ala2. C2 domains are found at residues Gly19–Phe137 and Val148–Tyr288. The 218-residue stretch at Asn371–Ile588 folds into the Ras-GAP domain. Ser554 is modified (phosphoserine). A PH domain is found at Val603–Arg704. The Btk-type zinc finger occupies Asn706–Gly742. Residues His714, Cys725, Cys726, and Cys736 each contribute to the Zn(2+) site. Residues Asp819–Ser847 are disordered.

It localises to the cell membrane. Functionally, inhibitory regulator of the Ras-cyclic AMP pathway. Binds inositol tetrakisphosphate (IP4) and phospholipids. This Mus musculus (Mouse) protein is Ras GTPase-activating protein 2 (Rasa2).